A 108-amino-acid chain; its full sequence is Evasin P1229 (108 aa).

Residues 1–31 form the signal peptide; sequence MEVRTFAFLQIVVFVALGIQLFAAVTDAADA. 3 disulfides stabilise this stretch: cysteine 41-cysteine 63, cysteine 45-cysteine 65, and cysteine 56-cysteine 76. The N-linked (GlcNAc...) asparagine glycan is linked to asparagine 44. Residues 88–108 form a disordered region; sequence GDPNNSDLDAATPRHPDASSR. The N-linked (GlcNAc...) asparagine glycan is linked to asparagine 91. The segment covering 99-108 has biased composition (basic and acidic residues); sequence TPRHPDASSR.

The protein localises to the secreted. Its function is as follows. Salivary chemokine-binding protein which binds to host chemokines CXCL1 and CXCL8. This Ixodes ricinus (Common tick) protein is Evasin P1229.